We begin with the raw amino-acid sequence, 415 residues long: Serine hydroxymethyltransferase (415 aa).

Residues leucine 120 and 124–126 each bind (6S)-5,6,7,8-tetrahydrofolate; that span reads GHL. Lysine 229 bears the N6-(pyridoxal phosphate)lysine mark.

The protein belongs to the SHMT family. Homodimer. The cofactor is pyridoxal 5'-phosphate.

Its subcellular location is the cytoplasm. It catalyses the reaction (6R)-5,10-methylene-5,6,7,8-tetrahydrofolate + glycine + H2O = (6S)-5,6,7,8-tetrahydrofolate + L-serine. It participates in one-carbon metabolism; tetrahydrofolate interconversion. Its pathway is amino-acid biosynthesis; glycine biosynthesis; glycine from L-serine: step 1/1. Functionally, catalyzes the reversible interconversion of serine and glycine with tetrahydrofolate (THF) serving as the one-carbon carrier. This reaction serves as the major source of one-carbon groups required for the biosynthesis of purines, thymidylate, methionine, and other important biomolecules. Also exhibits THF-independent aldolase activity toward beta-hydroxyamino acids, producing glycine and aldehydes, via a retro-aldol mechanism. This is Serine hydroxymethyltransferase from Pelotomaculum thermopropionicum (strain DSM 13744 / JCM 10971 / SI).